A 459-amino-acid polypeptide reads, in one-letter code: Putrescine aminotransferase (459 aa).

Pyridoxal 5'-phosphate contacts are provided by residues 150–151 (GT) and Gln274. At Lys300 the chain carries N6-(pyridoxal phosphate)lysine. Pyridoxal 5'-phosphate is bound at residue Thr332.

Belongs to the class-III pyridoxal-phosphate-dependent aminotransferase family. Putrescine aminotransferase subfamily. The cofactor is pyridoxal 5'-phosphate.

The enzyme catalyses an alkane-alpha,omega-diamine + 2-oxoglutarate = an omega-aminoaldehyde + L-glutamate. It catalyses the reaction putrescine + 2-oxoglutarate = 1-pyrroline + L-glutamate + H2O. It carries out the reaction cadaverine + 2-oxoglutarate = 5-aminopentanal + L-glutamate. Its pathway is amine and polyamine degradation; putrescine degradation; 4-aminobutanal from putrescine (transaminase route): step 1/1. In terms of biological role, catalyzes the aminotransferase reaction from putrescine to 2-oxoglutarate, leading to glutamate and 4-aminobutanal, which spontaneously cyclizes to form 1-pyrroline. This is the first step in one of two pathways for putrescine degradation, where putrescine is converted into 4-aminobutanoate (gamma-aminobutyrate or GABA) via 4-aminobutanal. Also functions as a cadaverine transaminase in a a L-lysine degradation pathway to succinate that proceeds via cadaverine, glutarate and L-2-hydroxyglutarate. The chain is Putrescine aminotransferase from Escherichia coli O6:K15:H31 (strain 536 / UPEC).